Reading from the N-terminus, the 297-residue chain is Trans-enoyl reductase TOXD (297 aa).

NADP(+) contacts are provided by residues 162–165 (STAT) and tyrosine 203.

Belongs to the zinc-containing alcohol dehydrogenase family. Monomer.

Functionally, trans-enoyl reductase; part of the diffuse TOX2 gene cluster that mediates the biosynthesis of the HC-toxin, cyclic tetrapeptide of structure cyclo(D-Pro-L-Ala-D-Ala-L-Aeo), where Aeo stands for 2-amino-9,10-epoxi-8-oxodecanoic acid. HC-toxin is a determinant of specificity and virulence in the interaction between the producing fungus and its host, maize. TOXD does not seem to play a role in HC-toxin biosynthesis. The chain is Trans-enoyl reductase TOXD from Cochliobolus carbonum (Maize leaf spot fungus).